The following is an 89-amino-acid chain: Small ribosomal subunit protein uS15 (89 aa).

The protein belongs to the universal ribosomal protein uS15 family. In terms of assembly, part of the 30S ribosomal subunit. Forms a bridge to the 50S subunit in the 70S ribosome, contacting the 23S rRNA.

In terms of biological role, one of the primary rRNA binding proteins, it binds directly to 16S rRNA where it helps nucleate assembly of the platform of the 30S subunit by binding and bridging several RNA helices of the 16S rRNA. Functionally, forms an intersubunit bridge (bridge B4) with the 23S rRNA of the 50S subunit in the ribosome. In Brevibacillus brevis (strain 47 / JCM 6285 / NBRC 100599), this protein is Small ribosomal subunit protein uS15.